Reading from the N-terminus, the 82-residue chain is Small ribosomal subunit protein bS16 (82 aa).

The protein belongs to the bacterial ribosomal protein bS16 family.

In Desulfosudis oleivorans (strain DSM 6200 / JCM 39069 / Hxd3) (Desulfococcus oleovorans), this protein is Small ribosomal subunit protein bS16.